A 172-amino-acid polypeptide reads, in one-letter code: Adenine phosphoribosyltransferase (172 aa).

This sequence belongs to the purine/pyrimidine phosphoribosyltransferase family. As to quaternary structure, homodimer.

The protein localises to the cytoplasm. It carries out the reaction AMP + diphosphate = 5-phospho-alpha-D-ribose 1-diphosphate + adenine. Its pathway is purine metabolism; AMP biosynthesis via salvage pathway; AMP from adenine: step 1/1. Its function is as follows. Catalyzes a salvage reaction resulting in the formation of AMP, that is energically less costly than de novo synthesis. This chain is Adenine phosphoribosyltransferase, found in Anaeromyxobacter dehalogenans (strain 2CP-1 / ATCC BAA-258).